The primary structure comprises 168 residues: Ribosome maturation factor RimP (168 aa).

Belongs to the RimP family.

The protein resides in the cytoplasm. Required for maturation of 30S ribosomal subunits. In Mycoplasma mobile (strain ATCC 43663 / 163K / NCTC 11711) (Mesomycoplasma mobile), this protein is Ribosome maturation factor RimP.